The chain runs to 472 residues: Probable dipeptidase A (472 aa).

Residue cysteine 10 is part of the active site.

It belongs to the peptidase C69 family.

The catalysed reaction is an L-aminoacyl-L-amino acid + H2O = 2 an L-alpha-amino acid. The chain is Probable dipeptidase A (pepDA) from Streptococcus pyogenes serotype M18 (strain MGAS8232).